The following is a 316-amino-acid chain: 4-hydroxy-3-methylbut-2-enyl diphosphate reductase (316 aa).

Residue Cys-12 coordinates [4Fe-4S] cluster. (2E)-4-hydroxy-3-methylbut-2-enyl diphosphate is bound by residues His-41 and His-74. 2 residues coordinate dimethylallyl diphosphate: His-41 and His-74. The isopentenyl diphosphate site is built by His-41 and His-74. Cys-96 is a binding site for [4Fe-4S] cluster. His-124 is a (2E)-4-hydroxy-3-methylbut-2-enyl diphosphate binding site. Residue His-124 participates in dimethylallyl diphosphate binding. Isopentenyl diphosphate is bound at residue His-124. Catalysis depends on Glu-126, which acts as the Proton donor. Thr-169 contributes to the (2E)-4-hydroxy-3-methylbut-2-enyl diphosphate binding site. Cys-199 is a [4Fe-4S] cluster binding site. (2E)-4-hydroxy-3-methylbut-2-enyl diphosphate-binding residues include Ser-227, Ser-228, Asn-229, and Ser-271. The dimethylallyl diphosphate site is built by Ser-227, Ser-228, Asn-229, and Ser-271. 4 residues coordinate isopentenyl diphosphate: Ser-227, Ser-228, Asn-229, and Ser-271.

The protein belongs to the IspH family. It depends on [4Fe-4S] cluster as a cofactor.

It catalyses the reaction isopentenyl diphosphate + 2 oxidized [2Fe-2S]-[ferredoxin] + H2O = (2E)-4-hydroxy-3-methylbut-2-enyl diphosphate + 2 reduced [2Fe-2S]-[ferredoxin] + 2 H(+). The enzyme catalyses dimethylallyl diphosphate + 2 oxidized [2Fe-2S]-[ferredoxin] + H2O = (2E)-4-hydroxy-3-methylbut-2-enyl diphosphate + 2 reduced [2Fe-2S]-[ferredoxin] + 2 H(+). The protein operates within isoprenoid biosynthesis; dimethylallyl diphosphate biosynthesis; dimethylallyl diphosphate from (2E)-4-hydroxy-3-methylbutenyl diphosphate: step 1/1. Its pathway is isoprenoid biosynthesis; isopentenyl diphosphate biosynthesis via DXP pathway; isopentenyl diphosphate from 1-deoxy-D-xylulose 5-phosphate: step 6/6. Catalyzes the conversion of 1-hydroxy-2-methyl-2-(E)-butenyl 4-diphosphate (HMBPP) into a mixture of isopentenyl diphosphate (IPP) and dimethylallyl diphosphate (DMAPP). Acts in the terminal step of the DOXP/MEP pathway for isoprenoid precursor biosynthesis. The protein is 4-hydroxy-3-methylbut-2-enyl diphosphate reductase of Xanthomonas campestris pv. campestris (strain ATCC 33913 / DSM 3586 / NCPPB 528 / LMG 568 / P 25).